The following is a 108-amino-acid chain: Large ribosomal subunit protein uL24 (108 aa).

It belongs to the universal ribosomal protein uL24 family. In terms of assembly, part of the 50S ribosomal subunit.

In terms of biological role, one of two assembly initiator proteins, it binds directly to the 5'-end of the 23S rRNA, where it nucleates assembly of the 50S subunit. One of the proteins that surrounds the polypeptide exit tunnel on the outside of the subunit. In Salinispora tropica (strain ATCC BAA-916 / DSM 44818 / JCM 13857 / NBRC 105044 / CNB-440), this protein is Large ribosomal subunit protein uL24.